The primary structure comprises 274 residues: Transcription factor Ovo-like 2 (274 aa).

The segment covering 1 to 11 has biased composition (basic residues); that stretch reads MPKVFLVKRRS. Positions 1–88 are disordered; sequence MPKVFLVKRR…ETPELHDAQG (88 aa). Residues 18 to 29 are compositionally biased toward basic and acidic residues; sequence SWDELPDDKRAD. The span at 50–74 shows a compositional bias: low complexity; sequence DGGSSSGCSSSAGEPGGAESSSSPR. 4 C2H2-type zinc fingers span residues 118–140, 146–168, 174–197, and 213–236; these read HNCD…LKCH, HLCT…VRTH, YKCE…KKIH, and YVCE…NSDH. S268 carries the phosphoserine modification.

Belongs to the krueppel C2H2-type zinc-finger protein family. Interacts (via zinc-finger domains) with CEBPA (via bZIP domain); the interaction inhibits the transcription factor activity of CEBPA and is required to repress adipogenesis. As to expression, expressed highly in testis, specifically in spermatocytes. Expressed also in skin and at lower levels in the ovary. Expressed in adipose tissues. Expression is lower than in testis and a relatively higher expression level is detected in the stromal vascular fraction (SVF) than in fat cells themselves.

Its subcellular location is the nucleus. In terms of biological role, zinc-finger transcription repressor factor. Plays a critical role in maintaining the identity of epithelial lineages by suppressing epithelial-to mesenchymal transition (EMT) mainly through the repression of ZEB1, an EMT inducer. Positively regulates neuronal differentiation. Suppresses cell cycling and terminal differentiation of keratinocytes by directly repressing MYC and NOTCH1. Important for the correct development of primordial germ cells in embryos. Plays dual functions in thermogenesis and adipogenesis to maintain energy balance. Essential for brown/beige adipose tissue-mediated thermogenesis, is necessary for the development of brown adipocytes. In white adipose tissues, limits adipogenesis by blocking CEBPA binding to its transcriptional targets and inhibiting its transcription factor activity. In Mus musculus (Mouse), this protein is Transcription factor Ovo-like 2.